Consider the following 388-residue polypeptide: Na(+)/H(+) antiporter NhaA (388 aa).

The Cytoplasmic segment spans residues 1–11 (MKHLHRFFSSD). A helical membrane pass occupies residues 12–31 (ASGGIILIIAAVLAMIMANS). Topologically, residues 32–58 (GATSGWYHDFLETPVQLRVGTLEINKN) are periplasmic. A helical transmembrane segment spans residues 59 to 80 (MLLWINDALMAVFFLLVGLEVK). Over 81–96 (RELMQGSLASLRQAAF) the chain is Cytoplasmic. The chain crosses the membrane as a helical span at residues 97–116 (PVIAAIGGMIVPALLYLAFN). Residues 117–122 (YADPIT) lie on the Periplasmic side of the membrane. A helical membrane pass occupies residues 123–130 (REGWAIPA). Topologically, residues 131-154 (ATDIAFALGVLALLGSRVPLALKI) are cytoplasmic. A helical transmembrane segment spans residues 155-176 (FLMALAIIDDLGAIIIIALFYT). Residues 177 to 180 (NDLS) are Periplasmic-facing. Residues 181–200 (MASLGVAAVAIAVLAVLNLC) form a helical membrane-spanning segment. Residues 201–204 (GVRR) lie on the Cytoplasmic side of the membrane. A helical membrane pass occupies residues 205 to 222 (TGVYILVGVVLWTAVLKS). A topological domain (periplasmic) is located at residue Gly-223. Residues 224–236 (VHATLAGVIVGFF) form a helical membrane-spanning segment. At 237 to 253 (IPLKEKHGRSPAKRLEH) the chain is on the cytoplasmic side. A helical membrane pass occupies residues 254 to 272 (VLHPWVAYLILPLFAFANA). The Periplasmic segment spans residues 273–286 (GVSLQGVTLEGLTS). The helical transmembrane segment at 287 to 310 (ILPLGIIAGLLIGKPLGISLFCWL) threads the bilayer. The Cytoplasmic portion of the chain corresponds to 311–339 (ALRLKLAHLPEGTTYQQIMAVGILCGIGF). Residues 340 to 350 (TMSIFIASLAF) form a helical membrane-spanning segment. At 351-357 (GSVDPEL) the chain is on the periplasmic side. A helical membrane pass occupies residues 358–380 (INWAKLGILVGSISSAVIGYSWL). Topologically, residues 381–388 (RVRLRPSV) are cytoplasmic.

This sequence belongs to the NhaA Na(+)/H(+) (TC 2.A.33) antiporter family.

The protein localises to the cell inner membrane. It catalyses the reaction Na(+)(in) + 2 H(+)(out) = Na(+)(out) + 2 H(+)(in). In terms of biological role, na(+)/H(+) antiporter that extrudes sodium in exchange for external protons. The chain is Na(+)/H(+) antiporter NhaA from Escherichia coli O6:K15:H31 (strain 536 / UPEC).